Here is a 208-residue protein sequence, read N- to C-terminus: Large ribosomal subunit protein bL25 (208 aa).

The protein belongs to the bacterial ribosomal protein bL25 family. CTC subfamily. Part of the 50S ribosomal subunit; part of the 5S rRNA/L5/L18/L25 subcomplex. Contacts the 5S rRNA. Binds to the 5S rRNA independently of L5 and L18.

This is one of the proteins that binds to the 5S RNA in the ribosome where it forms part of the central protuberance. In Burkholderia thailandensis (strain ATCC 700388 / DSM 13276 / CCUG 48851 / CIP 106301 / E264), this protein is Large ribosomal subunit protein bL25.